An 874-amino-acid chain; its full sequence is Alanine--tRNA ligase (874 aa).

Positions 562, 566, 664, and 668 each coordinate Zn(2+).

This sequence belongs to the class-II aminoacyl-tRNA synthetase family. It depends on Zn(2+) as a cofactor.

The protein resides in the cytoplasm. It catalyses the reaction tRNA(Ala) + L-alanine + ATP = L-alanyl-tRNA(Ala) + AMP + diphosphate. Functionally, catalyzes the attachment of alanine to tRNA(Ala) in a two-step reaction: alanine is first activated by ATP to form Ala-AMP and then transferred to the acceptor end of tRNA(Ala). Also edits incorrectly charged Ser-tRNA(Ala) and Gly-tRNA(Ala) via its editing domain. The protein is Alanine--tRNA ligase of Shewanella woodyi (strain ATCC 51908 / MS32).